The sequence spans 935 residues: Progesterone receptor (935 aa).

The tract at residues 1–50 (MTELKAKGPRAPHVAGSPSSPKVGSPLPCSQAAGPFPGSQTSDTLPEASA) is disordered. Residues 1-164 (MTELKAKGPR…PATQRVLSPL (164 aa)) form an AF3; mediates transcriptional activation region. The interval 1 to 568 (MTELKAKGPR…YSFESLPQKI (568 aa)) is modulating, Pro-Rich. Ser-20 carries the post-translational modification Phosphoserine. An LXXL motif 1 motif is present at residues 55-59 (LDGLL). Residues 62-159 (RICQGQDPTD…DPPAAPATQR (98 aa)) are disordered. Ser-81 carries the post-translational modification Phosphoserine. Positions 115–119 (LDTLW) match the LXXL motif 2 motif. Ser-130 and Ser-162 each carry phosphoserine. Residues 165–305 (MSRSGGKAGD…LATTVTDFIH (141 aa)) are mediates transcriptional transrepression. Positions 183–187 (KVLPR) match the Nuclear localization signal motif. Positions 185–252 (LPRGLSPSRQ…ALGGAAAGGG (68 aa)) are disordered. Ser-190 bears the Phosphoserine mark. Residues 191 to 203 (PSRQLLLPTSGSP) show a composition bias toward polar residues. Ser-213 is subject to Phosphoserine. A compositionally biased stretch (acidic residues) spans 220–231 (EVEEEDGSESED). Positions 232–246 (SAGPLLKGKPRALGG) are enriched in low complexity. Phosphoserine; by MAPK1 is present on Ser-294. Residues 331 to 365 (GGAGAASAFAPPRSSPSASSTPVPGGDFPDCAYAP) form a disordered region. Residues 335–356 (AASAFAPPRSSPSASSTPVPGG) are compositionally biased toward low complexity. Phosphoserine; by MAPK is present on Ser-345. Lys-388 is covalently cross-linked (Glycyl lysine isopeptide (Lys-Gly) (interchain with G-Cter in SUMO); alternate). Residue Lys-388 forms a Glycyl lysine isopeptide (Lys-Gly) (interchain with G-Cter in ubiquitin); alternate linkage. Ser-400 bears the Phosphoserine; by CDK2 mark. Positions 415-452 (PDFPLGPPPSLPPRAPPPRPGEAAVTAAPASASVSSAS) are disordered. Residues 418 to 434 (PLGPPPSLPPRAPPPRP) are compositionally biased toward pro residues. A compositionally biased stretch (low complexity) spans 435-452 (GEAAVTAAPASASVSSAS). Residues 456-548 (STLECILYKA…VYPPYLNYLR (93 aa)) are AF1; mediates transcriptional activation. Lys-533 is covalently cross-linked (Glycyl lysine isopeptide (Lys-Gly) (interchain with G-Cter in SUMO)). 2 NR C4-type zinc fingers span residues 569–589 (CLIC…CGSC) and 605–629 (CAGR…LRKC). The nuclear receptor DNA-binding region spans 569–641 (CLICGDEASG…AGMVLGGRKF (73 aa)). At Ser-678 the chain carries Phosphoserine. The NR LBD domain occupies 681-915 (QDIQLIPPLI…EFPEMMSEVI (235 aa)). The segment at 689–935 (LINLLLSIEP…MVKPLLFHKK (247 aa)) is AF2; mediates transcriptional activation.

Belongs to the nuclear hormone receptor family. As to quaternary structure, interacts with SMARD1 and UNC45A. Interacts with CUEDC2; the interaction promotes ubiquitination, decreases sumoylation, and represses transcriptional activity. Interacts with PIAS3; the interaction promotes sumoylation of PR in a hormone-dependent manner, inhibits DNA-binding, and alters nuclear export. Interacts with SP1; the interaction requires ligand-induced phosphorylation on Ser-344 by ERK1/2-MAPK. Interacts with PRMT2. Interacts with NCOA2 and NCOA1. Interacts with KLF9. Interacts with GTF2B. Phosphorylated on multiple serine sites. Several of these sites are hormone-dependent. Phosphorylation on Ser-294 is highly hormone-dependent and modulates ubiquitination and sumoylation on Lys-388. Phosphorylation on Ser-345 requires induction by hormone. Basal phosphorylation on Ser-81, Ser-162, Ser-190 and Ser-400 is increased in response to progesterone and can be phosphorylated in vitro by the CDK2-A1 complex. Increased levels of phosphorylation on Ser-400 also in the presence of EGF, heregulin, IGF, PMA and FBS. Phosphorylation at this site by CDK2 is ligand-independent, and increases nuclear translocation and transcriptional activity. Phosphorylation at Ser-162 and Ser-294, but not at Ser-190, is impaired during the G(2)/M phase of the cell cycle. Phosphorylation on Ser-345 by ERK1/2 MAPK is required for interaction with SP1. Post-translationally, sumoylation is hormone-dependent and represses transcriptional activity. Sumoylation on all three sites is enhanced by PIAS3. Desumoylated by SENP1. Sumoylation on Lys-388, the main site of sumoylation, is repressed by ubiquitination on the same site, and modulated by phosphorylation at Ser-294. In terms of processing, ubiquitination is hormone-dependent and represses sumoylation on the same site. Promoted by MAPK-mediated phosphorylation on Ser-294. Palmitoylated by ZDHHC7 and ZDHHC21. Palmitoylation is required for plasma membrane targeting and for rapid intracellular signaling via ERK and AKT kinases and cAMP generation.

It is found in the nucleus. It localises to the cytoplasm. Functionally, the steroid hormones and their receptors are involved in the regulation of eukaryotic gene expression and affect cellular proliferation and differentiation in target tissues. Transcriptional activator of several progesteron-dependent promoters in a variety of cell types. Involved in activation of SRC-dependent MAPK signaling on hormone stimulation. This Pithecia irrorata (Gray monk saki) protein is Progesterone receptor (PGR).